The following is a 410-amino-acid chain: Structure-specific endonuclease subunit SLX1 homolog (410 aa).

Positions 6–89 (QLHYCYFLLS…NICKVTRDNI (84 aa)) constitute a GIY-YIG domain.

This sequence belongs to the SLX1 family. As to quaternary structure, forms a heterodimer with a member of the SLX4 family. Requires a divalent metal cation as cofactor.

The protein resides in the nucleus. In terms of biological role, catalytic subunit of a heterodimeric structure-specific endonuclease that resolves DNA secondary structures generated during DNA repair and recombination. Has endonuclease activity towards branched DNA substrates, introducing single-strand cuts in duplex DNA close to junctions with ss-DNA. This chain is Structure-specific endonuclease subunit SLX1 homolog, found in Cryptosporidium parvum (strain Iowa II).